Reading from the N-terminus, the 756-residue chain is MPSKSIADHHAGYGVALAIVALLLIHGTALVMIFSDIKVGSQPQDLKDQLSYPSNYDAYTSHISGADHGHSEMWTDINPPSRKPLHGDSLDIKTNEEHITLSSPRTSTKTTNENGHEKDSKDIKFSFSTNRHPISVSPTTDIVSIAVSHNNPMGGDTWQVSRNGPNTVHVPIYGKPILRLNGEELSTQIAHMSMWDELAGSFKTFAATAESFHMITTTHLFNKTLHKDVFFVVHGWHGITNDTHIFLSAVRLLTRMMPTSCIIYLSWESQGAIGTAADAILLARRVNITQFLSAMPSQLRIHCMGHSLGSYVCGSICRQYHSLMSGICKGILGINPYEVLFSAPDLYARMHVDTIRLDAEYVAIFATTSQYLSTSDSDADEYIIVNDAVFMNSVCANPYEWNIHLCTTGYGELKSCERFGAANVTTSPGVVEDGSQICLRMLPIIAVLQSLDLKSSYPLLRIAPPDASNEVTHLPSIWNIYVVGKDYRYSTYAKNDSLWYSSAICAGDTGFSIPSVFTVFAPPSISLRVRAAVQQSSTIYKNITIYSAFLKNTSRYYPTVTLETLGPILSAYAWRGRMHNSSYYPLPLPEQEIMEYKCTHIDRTYTCIPTDLIYATTVWRQIFSMGHIFPVYPSNNCLPYRPTNAIIWRRPVLEIGVWNNITASFQRNKQLMALTFENHNTATNTTLLTFHDVCRESKIRSVVYFEYDWLETSMNITVLIPGLYTLRWFFPFEIIEMPVRVSYNNSFAQALTTSRV.

The signal sequence occupies residues 1-30 (MPSKSIADHHAGYGVALAIVALLLIHGTAL). The tract at residues 96–120 (EEHITLSSPRTSTKTTNENGHEKDS) is disordered. Over residues 100-113 (TLSSPRTSTKTTNE) the composition is skewed to polar residues. N-linked (GlcNAc...) asparagine; by host glycosylation is found at Asn222, Asn241, Asn287, Asn423, Asn495, Asn542, Asn552, Asn580, Asn660, Asn684, Asn715, and Asn744.

The protein resides in the secreted. Functionally, may play a role in host immune modulation since the protein is secreted and provides an advantage for growth in vivo while it is completely dispensable in cell culture. This chain is Virulence factor MDV010 (MDV010), found in Gallid herpesvirus 2 (strain Chicken/Md5/ATCC VR-987) (GaHV-2).